The following is a 1139-amino-acid chain: DNA-directed RNA polymerase subunit beta (1139 aa).

A disordered region spans residues 1085 to 1139; the sequence is ADTSNRHTPSRPTYESVTSEDLSPSPAFTRVLRTADANASRSLEEDEDEEEEEDF. Residues 1086–1106 show a composition bias toward polar residues; sequence DTSNRHTPSRPTYESVTSEDL. Acidic residues predominate over residues 1128-1139; that stretch reads EEDEDEEEEEDF.

This sequence belongs to the RNA polymerase beta chain family. As to quaternary structure, in cyanobacteria the RNAP catalytic core is composed of 2 alpha, 1 beta, 1 beta', 1 gamma and 1 omega subunit. When a sigma factor is associated with the core the holoenzyme is formed, which can initiate transcription.

It carries out the reaction RNA(n) + a ribonucleoside 5'-triphosphate = RNA(n+1) + diphosphate. DNA-dependent RNA polymerase catalyzes the transcription of DNA into RNA using the four ribonucleoside triphosphates as substrates. The sequence is that of DNA-directed RNA polymerase subunit beta from Synechococcus sp. (strain JA-2-3B'a(2-13)) (Cyanobacteria bacterium Yellowstone B-Prime).